The primary structure comprises 48 residues: MARREFGKGARRCRRCGDTHGVIQKYGIMLCRQCFREVAEKMGFKKYN.

Zn(2+) is bound by residues Cys13, Cys16, Cys31, and Cys34.

The protein belongs to the universal ribosomal protein uS14 family. Zinc-binding uS14 subfamily. In terms of assembly, part of the 30S ribosomal subunit. Zn(2+) is required as a cofactor.

Its function is as follows. Binds 16S rRNA, required for the assembly of 30S particles. The polypeptide is Small ribosomal subunit protein uS14 (Methanopyrus kandleri (strain AV19 / DSM 6324 / JCM 9639 / NBRC 100938)).